We begin with the raw amino-acid sequence, 371 residues long: DnaJ homolog subfamily B member 14 (371 aa).

The Cytoplasmic portion of the chain corresponds to 1–238 (MESNRDEAER…GHDREEERAD (238 aa)). One copy of the TPR repeat lies at 8 to 41 (AERCVRIGKAAIEAGDKEKARRFFSKAERLYPSS). Residues 48–92 (DALEKNDTAGNGPQSEKMSKSTEQPKAEKDSSGDTGKGHTQDQVD) are disordered. The segment covering 64–89 (KMSKSTEQPKAEKDSSGDTGKGHTQD) has biased composition (basic and acidic residues). In terms of domain architecture, J spans 102-166 (TYYEVLGVSP…EKRKQYDLTG (65 aa)). Residues 215 to 235 (GRTRYSHHQHHHHSGHDREEE) form a disordered region. Positions 218–229 (RYSHHQHHHHSG) are enriched in basic residues. Residues 239–259 (GGFSMFIQLMPIIVLILVSLL) traverse the membrane as a helical segment. Residues 260-371 (SQLMVSNPPY…NRLTSLFRGG (112 aa)) are Lumenal-facing.

This sequence belongs to the DnaJ family. DNAJB12/DNAJB14 subfamily.

The protein localises to the endoplasmic reticulum membrane. In terms of biological role, acts as a co-chaperone with HSPA8/Hsc70; required to promote protein folding and trafficking, prevent aggregation of client proteins, and promote unfolded proteins to endoplasmic reticulum-associated degradation (ERAD) pathway. Acts by determining hspa8/Hsc70's ATPase and polypeptide-binding activities. Can also act independently of hspa8/Hsc70: together with dnajb12, acts as a chaperone that promotes maturation of potassium channels by stabilizing nascent channel subunits and assembling them into tetramers. While stabilization of nascent channel proteins is dependent on hspa8/Hsc70, the process of oligomerization of channel subunits is independent of hspa8/Hsc70. The protein is DnaJ homolog subfamily B member 14 (dnajb14) of Xenopus laevis (African clawed frog).